The primary structure comprises 300 residues: Porphobilinogen deaminase (300 aa).

At C239 the chain carries S-(dipyrrolylmethanemethyl)cysteine.

The protein belongs to the HMBS family. As to quaternary structure, monomer. Dipyrromethane serves as cofactor.

It carries out the reaction 4 porphobilinogen + H2O = hydroxymethylbilane + 4 NH4(+). The protein operates within porphyrin-containing compound metabolism; protoporphyrin-IX biosynthesis; coproporphyrinogen-III from 5-aminolevulinate: step 2/4. In terms of biological role, tetrapolymerization of the monopyrrole PBG into the hydroxymethylbilane pre-uroporphyrinogen in several discrete steps. The sequence is that of Porphobilinogen deaminase from Francisella tularensis subsp. novicida (strain U112).